Here is a 296-residue protein sequence, read N- to C-terminus: 4-hydroxy-tetrahydrodipicolinate synthase (296 aa).

Pyruvate is bound at residue threonine 49. Catalysis depends on tyrosine 137, which acts as the Proton donor/acceptor. Lysine 165 functions as the Schiff-base intermediate with substrate in the catalytic mechanism. Isoleucine 207 serves as a coordination point for pyruvate.

Belongs to the DapA family. As to quaternary structure, homotetramer; dimer of dimers.

It localises to the cytoplasm. It catalyses the reaction L-aspartate 4-semialdehyde + pyruvate = (2S,4S)-4-hydroxy-2,3,4,5-tetrahydrodipicolinate + H2O + H(+). It participates in amino-acid biosynthesis; L-lysine biosynthesis via DAP pathway; (S)-tetrahydrodipicolinate from L-aspartate: step 3/4. Functionally, catalyzes the condensation of (S)-aspartate-beta-semialdehyde [(S)-ASA] and pyruvate to 4-hydroxy-tetrahydrodipicolinate (HTPA). The sequence is that of 4-hydroxy-tetrahydrodipicolinate synthase from Rhodopseudomonas palustris (strain BisA53).